The chain runs to 111 residues: Regulator of ribonuclease activity B (111 aa).

The protein belongs to the RraB family. In terms of assembly, interacts with the C-terminal region of Rne.

The protein localises to the cytoplasm. Globally modulates RNA abundance by binding to RNase E (Rne) and regulating its endonucleolytic activity. Can modulate Rne action in a substrate-dependent manner by altering the composition of the degradosome. This is Regulator of ribonuclease activity B from Pseudoalteromonas translucida (strain TAC 125).